The following is an 889-amino-acid chain: Low-affinity potassium transport protein (889 aa).

At 1–51 (MPTAKRTSSRASLALPFQLRLVHKKSWGHRLRDFISGFLKSCRPIAKYVFP) the chain is on the cytoplasmic side. The chain crosses the membrane as a helical span at residues 52–73 (NFIVVHYIYLITLSIIGSILLY). Residues 74 to 80 (PCKNTAF) are Extracellular-facing. The helical transmembrane segment at 81–101 (IDVLFLAAGASTQGGLATKST) threads the bilayer. Over 102–109 (NDFNLYQQ) the chain is Cytoplasmic. Residues 110–130 (IVVYVITLLSTPILIHGFLAF) form a helical membrane-spanning segment. Residues 131–464 (VRLYWFERYF…EYRALRLLCC (334 aa)) are Extracellular-facing. Residues 189 to 244 (REDPRQSASDVPMDSPDTSALSSISPLNVSSSKEESSDTQSSPPNFSSKRQPSDVD) are disordered. The span at 207–219 (SALSSISPLNVSS) shows a compositional bias: low complexity. 3 N-linked (GlcNAc...) asparagine glycosylation sites follow: asparagine 216, asparagine 233, and asparagine 265. A helical transmembrane segment spans residues 465-487 (ILMVYYIGFNILAFVTIVPWACT). The Cytoplasmic segment spans residues 488–499 (RHHYSEIIRRNG). Residues 500 to 521 (VSPTWWGFFTAMSAFSNLGLSL) form a helical membrane-spanning segment. The Extracellular segment spans residues 522 to 524 (TAD). A helical transmembrane segment spans residues 525-545 (SMVSFDTAPYPLIFMMFFIII). Residues 546–548 (GNT) lie on the Cytoplasmic side of the membrane. The helical transmembrane segment at 549–569 (GFPIMLRFIIWIMFKTSRDLS) threads the bilayer. Residues 570 to 584 (QFKESLGFLLDHPRR) lie on the Extracellular side of the membrane. A helical transmembrane segment spans residues 585-605 (CFTLLFPSGPTWWLFTTLVVL). Residues 606 to 609 (NATD) are Cytoplasmic-facing. A helical membrane pass occupies residues 610–630 (WILFIILDFNSAVVRQVAKGY). Over 631–657 (RALMGLFQSVCTRTAGFNVVDLSKLHP) the chain is Extracellular. A helical membrane pass occupies residues 658 to 678 (SIQVSYMLMMYVSVLPLAISI). The Cytoplasmic portion of the chain corresponds to 679–743 (RRTNVYEEQS…KSFVGAHLRR (65 aa)). A disordered region spans residues 705-733 (DDIKETDHDGESEERDTVSTKSKPKKQSP). The helical transmembrane segment at 744-764 (QLSFDLWYLFLGLFIICICEG) threads the bilayer. Residues 765–776 (RKIEDVNKPDFN) are Extracellular-facing. Residues 777-797 (VFAILFEVVSAYGTVGLSLGY) traverse the membrane as a helical segment. Residues 798–889 (PNTNTSLSAQ…KIATKFWGKH (92 aa)) lie on the Cytoplasmic side of the membrane.

Belongs to the TrkH potassium transport family.

It is found in the membrane. Its function is as follows. This protein is required for low-affinity potassium transport. The protein is Low-affinity potassium transport protein (TRK2) of Saccharomyces cerevisiae (strain ATCC 204508 / S288c) (Baker's yeast).